The primary structure comprises 152 residues: Ninjurin-1 (152 aa).

Residue Met-1 is modified to N-acetylmethionine. The tract at residues 1-26 (MDSGTEEYELNGGLPPGTPGSPDASP) is disordered. The Extracellular portion of the chain corresponds to 1-78 (MDSGTEEYEL…EQGPSFAFYV (78 aa)). Ser-21 and Ser-25 each carry phosphoserine. The interval 26 to 37 (PARWGWRHGPIN) is N-terminal adhesion motif. Positions 40-69 (HYASKKSAAESMLDIALLMANASQLKAVVE) are required to induce plasma membrane rupture. A helix alpha1 region spans residues 44-55 (KKSAAESMLDIA). The helix alpha2 stretch occupies residues 58–74 (MANASQLKAVVEQGPSF). N-linked (GlcNAc...) asparagine glycosylation occurs at Asn-60. Residues 79 to 103 (PLVVLISISLVLQIGVGVLLIFLVK) form a helical membrane-spanning segment. The Cytoplasmic segment spans residues 104–113 (YDLNNPAKHA). The chain crosses the membrane as a helical span at residues 114–138 (KLDFLNNLATGLVFIIVVVNIFITA). Residues 139-152 (FGVQKPLMDMAPQQ) are Extracellular-facing.

It belongs to the ninjurin family. As to quaternary structure, homodimer; in absence of death stimuli, forms an inactive homodimer. Homooligomer; in response to death stimuli, homooligomerizes into long, highly branched filaments and large, ring-shaped structures in the membrane. Post-translationally, cleaved by MMP9 protease to generate the Secreted ninjurin-1 form. In terms of processing, N-linked glycosylation is required for homooligomerization. In terms of tissue distribution, widely expressed in both adult and embryonic tissues, primarily those of epithelial origin.

The protein localises to the cell membrane. It localises to the synaptic cell membrane. Its subcellular location is the secreted. With respect to regulation, in response to death stimuli, homooligomerizes and disrupts membrane integrity by introducing the hydrophilic faces of alpha1 and alpha2 helices into the hydrophobic membrane. Homooligomerization and ability to mediate plasma membrane rupture is inhibited by glycine; it is unclear whether glycine directly or indirectly inhibits homooligomerization. In normal conditions, NINJ1 is autoinhibited via formation of a homodimer: in the inactive homodimer, the alpha1 and alpha2 helices (residues 44-74) form a single transmembrane region without a kink, in which hydrophilic faces of alpha1 and alpha2 helices are sequestered. In terms of biological role, effector of various programmed cell death, such as pyroptosis and necroptosis, which mediates plasma membrane rupture (cytolysis). Oligomerizes in response to death stimuli and forms ring-like structures on the plasma membrane: acts by cutting and shedding membrane disks, like a cookie cutter, leading to membrane damage and loss that cannot be repaired by the cell. Plasma membrane rupture leads to release intracellular molecules named damage-associated molecular patterns (DAMPs) that propagate the inflammatory response. Mechanistically, mediates plasma membrane rupture by introducing hydrophilic faces of 2 alpha helices into the hydrophobic membrane. Induces plasma membrane rupture downstream of Gasdermin (GSDMA, GSDMB, GSDMC, GSDMD, or GSDME) or MLKL during pyroptosis or necroptosis, respectively. Acts as an effector of PANoptosis downstream of CASP1, CASP4, CASP8 and RIPK3. Also induces plasma membrane rupture in response to cell swelling caused by osmotic stress and ferroptosis downstream of lipid peroxidation. Acts as a regulator of Toll-like receptor 4 (TLR4) signaling triggered by lipopolysaccharide (LPS) during systemic inflammation; directly binds LPS. Involved in leukocyte migration during inflammation by promoting transendothelial migration of macrophages via homotypic binding. Promotes the migration of monocytes across the brain endothelium to central nervous system inflammatory lesions. Also acts as a homophilic transmembrane adhesion molecule involved in various processes such as axonal growth, cell chemotaxis and angiogenesis. Promotes cell adhesion by mediating homophilic interactions via its extracellular N-terminal adhesion motif (N-NAM). Involved in the progression of the inflammatory stress by promoting cell-to-cell interactions between immune cells and endothelial cells. Plays a role in nerve regeneration by promoting maturation of Schwann cells. Acts as a regulator of angiogenesis. Promotes the formation of new vessels by mediating the interaction between capillary pericyte cells and endothelial cells. Promotes osteoclasts development by enhancing the survival of prefusion osteoclasts. Also involved in striated muscle growth and differentiation. Functionally, secreted form generated by cleavage, which has chemotactic activity. Acts as an anti-inflammatory mediator by promoting monocyte recruitment, thereby ameliorating atherosclerosis. The protein is Ninjurin-1 of Homo sapiens (Human).